The sequence spans 1408 residues: TSET complex member tstA (1408 aa).

Disordered stretches follow at residues 259-347, 998-1055, and 1091-1139; these read FWPT…SIIA, QQSS…AVGS, and SSSS…TNLN. Low complexity predominate over residues 266-308; sequence NNNNNNNNQQINNNNNNNNNNNNNNNNNNNNNNNNNNNNNQNN. Residues 309 to 318 are compositionally biased toward polar residues; that stretch reads LINGISSMNL. 2 stretches are compositionally biased toward low complexity: residues 319 to 347 and 998 to 1051; these read SSIT…SIIA and QQSS…ISTS.

The protein belongs to the TPLATE family. As to quaternary structure, component of the TSET complex, a heterohexamer composed of tstA, tstB, tstC, tstD, tstE and tstF, which may act in plasma membrane turnover. tstA, tstB, tstC and tstD are likely to be the core complex members with tstE and tstF acting as associated scaffold proteins.

This is TSET complex member tstA from Dictyostelium discoideum (Social amoeba).